Reading from the N-terminus, the 471-residue chain is Cytochrome b-c1 complex subunit 1, mitochondrial (471 aa).

It belongs to the peptidase M16 family.

It localises to the mitochondrion matrix. The protein is Cytochrome b-c1 complex subunit 1, mitochondrial (ucr-1) of Caenorhabditis elegans.